The chain runs to 349 residues: Ion-translocating oxidoreductase complex subunit D (349 aa).

3 helical membrane passes run 20–42 (VMQRVILCLLPGLVVQCAFFGWG), 77–99 (SAMLTAILIGVAIPPLAPWWMIV), and 124–144 (AMAAYVLLLVSFPVQMTTWIA). Thr185 is modified (FMN phosphoryl threonine). 5 helical membrane passes run 212 to 232 (STGVGWFWVNLAYLAGGLVLL), 239 to 259 (WHISTGVLLGLFVASSIGFLL), 265 to 285 (ASPLMHLFSGATMLAAFFIAT), 291 to 311 (ATSSRGRIIFGALIGVLVYII), and 315 to 335 (GGYPDAFAFAVLLANLCAPFI).

Belongs to the NqrB/RnfD family. In terms of assembly, the complex is composed of six subunits: RnfA, RnfB, RnfC, RnfD, RnfE and RnfG. Requires FMN as cofactor.

It is found in the cell inner membrane. In terms of biological role, part of a membrane-bound complex that couples electron transfer with translocation of ions across the membrane. The sequence is that of Ion-translocating oxidoreductase complex subunit D from Shewanella baltica (strain OS223).